The primary structure comprises 346 residues: Heat-inducible transcription repressor HrcA (346 aa).

This sequence belongs to the HrcA family.

Negative regulator of class I heat shock genes (grpE-dnaK-dnaJ and groELS operons). Prevents heat-shock induction of these operons. The sequence is that of Heat-inducible transcription repressor HrcA from Fructilactobacillus sanfranciscensis (Lactobacillus sanfranciscensis).